Here is a 256-residue protein sequence, read N- to C-terminus: 5'-nucleotidase SurE (256 aa).

4 residues coordinate a divalent metal cation: aspartate 13, aspartate 14, serine 44, and asparagine 101.

It belongs to the SurE nucleotidase family. A divalent metal cation serves as cofactor.

The protein resides in the cytoplasm. It catalyses the reaction a ribonucleoside 5'-phosphate + H2O = a ribonucleoside + phosphate. Nucleotidase that shows phosphatase activity on nucleoside 5'-monophosphates. This Porphyromonas gingivalis (strain ATCC 33277 / DSM 20709 / CIP 103683 / JCM 12257 / NCTC 11834 / 2561) protein is 5'-nucleotidase SurE.